The chain runs to 191 residues: Oleosin 20.3 kDa (191 aa).

A2 is modified (N-acetylalanine). A polar region spans residues 2 to 54 (ANVDRDRRVHVDRTDKRVHQPNYEDDVGFGGYGGYGAGSDYKSRGPSTNQILA). 2 helical membrane-spanning segments follow: residues 52–72 (ILALIAGVPIGGTLLTLAGLT) and 99–119 (LTIGLAVTGILASGLFGLTGL). The tract at residues 55–128 (LIAGVPIGGT…LSSVSWVLNY (74 aa)) is hydrophobic.

This sequence belongs to the oleosin family.

The protein localises to the lipid droplet. It localises to the membrane. In terms of biological role, may have a structural role to stabilize the lipid body during desiccation of the seed by preventing coalescence of the oil. Probably interacts with both lipid and phospholipid moieties of lipid bodies. May also provide recognition signals for specific lipase anchorage in lipolysis during seedling growth. The polypeptide is Oleosin 20.3 kDa (OL2) (Arabidopsis thaliana (Mouse-ear cress)).